The primary structure comprises 123 residues: Ragulator complex protein LAMTOR3-A (123 aa).

Belongs to the LAMTOR3 family. As to quaternary structure, part of the Ragulator complex composed of lamtor1, lamtor2, lamtor3, lamtor4 and lamtor5. The Ragulator complex interacts with slc38a9; the probable amino acid sensor. Component of the lysosomal folliculin complex (LFC).

The protein resides in the late endosome membrane. Functionally, as part of the Ragulator complex it is involved in amino acid sensing and activation of mTORC1, a signaling complex promoting cell growth in response to growth factors, energy levels, and amino acids. Activated by amino acids through a mechanism involving the lysosomal V-ATPase, the Ragulator plays a dual role for the small GTPases Rag (RagA/RRAGA, RagB/RRAGB, RagC/RRAGC and/or RagD/RRAGD): it (1) acts as a guanine nucleotide exchange factor (GEF), activating the small GTPases Rag and (2) mediates recruitment of Rag GTPases to the lysosome membrane. Activated Ragulator and Rag GTPases function as a scaffold recruiting mTORC1 to lysosomes where it is in turn activated. The chain is Ragulator complex protein LAMTOR3-A (lamtor3-a) from Xenopus laevis (African clawed frog).